Here is a 189-residue protein sequence, read N- to C-terminus: Chitin synthase 1 (189 aa).

This sequence belongs to the chitin synthase family. Class I subfamily.

The protein localises to the cell membrane. It catalyses the reaction [(1-&gt;4)-N-acetyl-beta-D-glucosaminyl](n) + UDP-N-acetyl-alpha-D-glucosamine = [(1-&gt;4)-N-acetyl-beta-D-glucosaminyl](n+1) + UDP + H(+). In terms of biological role, polymerizes chitin, a structural polymer of the cell wall and septum, by transferring the sugar moiety of UDP-GlcNAc to the non-reducing end of the growing chitin polymer. The chain is Chitin synthase 1 (CHS1) from Exophiala jeanselmei (Dematiaceous fungus).